We begin with the raw amino-acid sequence, 712 residues long: T-box transcription factor TBX2 (712 aa).

Positions 109–287 form a DNA-binding region, T-box; that stretch reads LEAKELWDQF…NNPFAKGFRD (179 aa). The segment at 313-449 is disordered; it reads PERDGAESDA…EGKEPGLAPL (137 aa). 3 positions are modified to phosphoserine: Ser-336, Ser-342, and Ser-359. Composition is skewed to basic and acidic residues over residues 349 to 371, 390 to 408, and 420 to 443; these read TRAD…EERA, TEPE…KEPA, and SLEK…EGKE. The repression domain 1 (RD1) stretch occupies residues 517-601; sequence GGGGGGGGGP…ATSAAAAAAA (85 aa). Phosphoserine occurs at positions 622, 653, 657, and 676. Disordered regions lie at residues 642–661 and 666–688; these read AAEG…PLPE and KVGA…ASEL.

In terms of assembly, binds DNA as a monomer. Interacts with PML (isoform PML-2, isoform PML-3 and isoform PML-4).

It is found in the nucleus. Its function is as follows. Transcription factor which acts as a transcriptional repressor. May also function as a transcriptional activator. Binds to the palindromic T site 5'-TTCACACCTAGGTGTGAA-3' DNA sequence, or a half-site, which are present in the regulatory region of several genes. Required for cardiac atrioventricular canal formation. May cooperate with NKX2.5 to negatively modulate expression of NPPA/ANF in the atrioventricular canal. May play a role as a positive regulator of TGFB2 expression, perhaps acting in concert with GATA4 in the developing outflow tract myocardium. Plays a role in limb pattern formation. Acts as a transcriptional repressor of ADAM10 gene expression, perhaps in concert with histone deacetylase HDAC1 as cofactor. Involved in branching morphogenesis in both developing lungs and adult mammary glands, via negative modulation of target genes; acting redundantly with TBX3. Required, together with TBX3, to maintain cell proliferation in the embryonic lung mesenchyme; perhaps acting downstream of SHH, BMP and TGFbeta signaling. Involved in modulating early inner ear development, acting independently of, and also redundantly with TBX3, in different subregions of the developing ear. Acts as a negative regulator of PML function in cellular senescence. Acts as a negative regulator of expression of CDKN1A/p21, IL33 and CCN4; repression of CDKN1A is enhanced in response to UV-induced stress, perhaps as a result of phosphorylation by p38 MAPK. Negatively modulates expression of CDKN2A/p14ARF and CDH1/E-cadherin. Plays a role in induction of the epithelial-mesenchymal transition (EMT). Plays a role in melanocyte proliferation, perhaps via regulation of cyclin CCND1. Involved in melanogenesis, acting via negative modulation of expression of DHICA oxidase/TYRP1 and P protein/OCA2. Involved in regulating retinal pigment epithelium (RPE) cell proliferation, perhaps via negatively modulating transcription of the transcription factor CEBPD. This chain is T-box transcription factor TBX2 (TBX2), found in Canis lupus familiaris (Dog).